We begin with the raw amino-acid sequence, 394 residues long: Elongation factor Tu (394 aa).

Positions 10 to 204 constitute a tr-type G domain; that stretch reads KPHVNIGTIG…AVDSYIPQPI (195 aa). The tract at residues 19–26 is G1; the sequence is GHVDHGKT. Residue 19-26 participates in GTP binding; it reads GHVDHGKT. Mg(2+) is bound at residue T26. Residues 60 to 64 form a G2 region; the sequence is GITIS. The segment at 81-84 is G3; that stretch reads DCPG. GTP-binding positions include 81-85 and 136-139; these read DCPGH and NKVD. Residues 136 to 139 are G4; it reads NKVD. The G5 stretch occupies residues 174 to 176; the sequence is SAL.

The protein belongs to the TRAFAC class translation factor GTPase superfamily. Classic translation factor GTPase family. EF-Tu/EF-1A subfamily. In terms of assembly, monomer.

It is found in the cytoplasm. The catalysed reaction is GTP + H2O = GDP + phosphate + H(+). Functionally, GTP hydrolase that promotes the GTP-dependent binding of aminoacyl-tRNA to the A-site of ribosomes during protein biosynthesis. In Rickettsia prowazekii (strain Madrid E), this protein is Elongation factor Tu.